The primary structure comprises 93 residues: UPF0369 protein RC0209 (93 aa).

The tract at residues 1-24 is disordered; it reads MDDKKDNRHLSKPAYREECTGDTE. The region spanning 8-55 is the RPE1 insert domain; that stretch reads RHLSKPAYREECTGDTERSTTAYMDILEDVSTGSTSKLPLEAKFVKIS.

Belongs to the SDHAF4 family.

The chain is UPF0369 protein RC0209 from Rickettsia conorii (strain ATCC VR-613 / Malish 7).